A 42-amino-acid chain; its full sequence is Photosystem I reaction center subunit IX (42 aa).

The chain crosses the membrane as a helical span at residues Y7–I27.

This sequence belongs to the PsaJ family.

The protein localises to the plastid. It is found in the chloroplast thylakoid membrane. Its function is as follows. May help in the organization of the PsaE and PsaF subunits. The protein is Photosystem I reaction center subunit IX of Nephroselmis olivacea (Green alga).